A 299-amino-acid polypeptide reads, in one-letter code: Telomere repeat-binding factor 2 (299 aa).

One can recognise an HTH myb-type domain in the interval 1–61 (MGAPKQKWTP…KWRNISVTAL (61 aa)). The H-T-H motif DNA-binding region spans 28 to 57 (WRTILSDTEFSLILKSRSNVDLKDKWRNIS). Positions 93–116 (LTNDDERAKPTSPGGSGGGSPRTC) are disordered. Residues 121-189 (SITSLDKIIF…KIKHKYRFSS (69 aa)) enclose the H15 domain. Residues 243-288 (EAAEAAARAVAEAEFAITEAEQAAKEAERAEAEAEAAQIFAKAAMK) are a coiled coil.

It belongs to the histone H1/H5 family. SMH subfamily. Forms a homodimer and heterodimers with TRB1 or TRB3. Interacts with TRB1 and TRB3. As to expression, ubiquitous.

The protein resides in the nucleus. It localises to the nucleolus. Its subcellular location is the chromosome. Its function is as follows. Binds preferentially double-stranded telomeric repeats, but it can also bind to the single G-rich telomeric strand. The polypeptide is Telomere repeat-binding factor 2 (TRB2) (Arabidopsis thaliana (Mouse-ear cress)).